We begin with the raw amino-acid sequence, 410 residues long: Chaperone protein dnaJ 15 (410 aa).

In terms of domain architecture, J spans 17 to 82 (DPYEVLCVSK…EKRRHYDNAG (66 aa)). The stretch at 284 to 344 (AKTYEDTTEK…TVDELLKQRD (61 aa)) forms a coiled coil. The interval 351–410 (SVVKTPSGNNLSNGSSSKAQGDESKGDGDSAGEEGGTENRDKSKRKWFNLNLKGSDKKLG) is disordered. The segment covering 357–367 (SGNNLSNGSSS) has biased composition (low complexity).

Belongs to the DnaJ family. B/II subfamily. As to expression, expressed at high levels in root cap, root tip meristematic region and elongation zones, and at lower levels in mature part of roots (at protein level). Constitutively expressed in seedlings, etiolated or not, roots, rosette leaves, cauline leaves, stems, flowers, siliques and pollen.

It localises to the cytoplasm. The protein resides in the cytoskeleton. It is found in the endoplasmic reticulum membrane. Its subcellular location is the golgi apparatus membrane. Its function is as follows. Plays a continuous role in plant development probably in the structural organization of compartments. Seems to be involved in early gravitropic signal transduction within the gravity-perceiving cells (statocytes), where it influences pH changes and auxin distribution. Probably affects the localization and/or activity of auxin efflux carrier components (PIN proteins) or other proteins involved in lateral auxin transport. This chain is Chaperone protein dnaJ 15 (ATJ15), found in Arabidopsis thaliana (Mouse-ear cress).